Here is a 314-residue protein sequence, read N- to C-terminus: tRNA pseudouridine synthase B (314 aa).

The Nucleophile role is filled by aspartate 47.

It belongs to the pseudouridine synthase TruB family. Type 1 subfamily.

It catalyses the reaction uridine(55) in tRNA = pseudouridine(55) in tRNA. Functionally, responsible for synthesis of pseudouridine from uracil-55 in the psi GC loop of transfer RNAs. The protein is tRNA pseudouridine synthase B of Vibrio campbellii (strain ATCC BAA-1116).